The primary structure comprises 370 residues: Aspartate-semialdehyde dehydrogenase (370 aa).

NADP(+)-binding positions include 10–13, 37–38, and Gln73; these read RGMV and TS. Arg102 provides a ligand contact to phosphate. Cys135 (acyl-thioester intermediate) is an active-site residue. Gln162 contributes to the substrate binding site. NADP(+) contacts are provided by residues 165-166 and Pro193; that span reads SG. Glu241 is a binding site for substrate. Residue Lys244 participates in phosphate binding. Arg268 provides a ligand contact to substrate. The active-site Proton acceptor is His275. Gln351 lines the NADP(+) pocket.

It belongs to the aspartate-semialdehyde dehydrogenase family. In terms of assembly, homodimer.

The enzyme catalyses L-aspartate 4-semialdehyde + phosphate + NADP(+) = 4-phospho-L-aspartate + NADPH + H(+). Its pathway is amino-acid biosynthesis; L-lysine biosynthesis via DAP pathway; (S)-tetrahydrodipicolinate from L-aspartate: step 2/4. The protein operates within amino-acid biosynthesis; L-methionine biosynthesis via de novo pathway; L-homoserine from L-aspartate: step 2/3. It functions in the pathway amino-acid biosynthesis; L-threonine biosynthesis; L-threonine from L-aspartate: step 2/5. Catalyzes the NADPH-dependent formation of L-aspartate-semialdehyde (L-ASA) by the reductive dephosphorylation of L-aspartyl-4-phosphate. The sequence is that of Aspartate-semialdehyde dehydrogenase (asd) from Pseudomonas aeruginosa (strain ATCC 15692 / DSM 22644 / CIP 104116 / JCM 14847 / LMG 12228 / 1C / PRS 101 / PAO1).